We begin with the raw amino-acid sequence, 354 residues long: S-adenosylmethionine:tRNA ribosyltransferase-isomerase (354 aa).

It belongs to the QueA family. Monomer.

The protein localises to the cytoplasm. The enzyme catalyses 7-aminomethyl-7-carbaguanosine(34) in tRNA + S-adenosyl-L-methionine = epoxyqueuosine(34) in tRNA + adenine + L-methionine + 2 H(+). The protein operates within tRNA modification; tRNA-queuosine biosynthesis. Its function is as follows. Transfers and isomerizes the ribose moiety from AdoMet to the 7-aminomethyl group of 7-deazaguanine (preQ1-tRNA) to give epoxyqueuosine (oQ-tRNA). This Pseudomonas syringae pv. syringae (strain B728a) protein is S-adenosylmethionine:tRNA ribosyltransferase-isomerase.